A 103-amino-acid chain; its full sequence is Histone H4.2 (103 aa).

The segment covering 1-14 (MTGRGKGGKGLGKG) has biased composition (gly residues). Positions 1 to 20 (MTGRGKGGKGLGKGGAKRHR) are disordered. Lysine 6 bears the N6-acetyl-N6-methyllysine; alternate mark. N6-methyllysine; alternate is present on residues lysine 6, lysine 9, and lysine 13. N6-acetyl-N6-methyllysine; alternate is present on lysine 13. Residues 17–21 (KRHRK) mediate DNA binding. Lysine 92 is subject to N6-glutaryllysine.

Belongs to the histone H4 family. As to quaternary structure, the nucleosome is a histone octamer containing two molecules each of H2A, H2B, H3 and H4 assembled in one H3-H4 heterotetramer and two H2A-H2B heterodimers. The octamer wraps approximately 147 bp of DNA. Post-translationally, glutarylation at Lys-92 (H4K91glu) destabilizes nucleosomes by promoting dissociation of the H2A-H2B dimers from nucleosomes.

The protein localises to the nucleus. It is found in the chromosome. Core component of nucleosome. Nucleosomes wrap and compact DNA into chromatin, limiting DNA accessibility to the cellular machineries which require DNA as a template. Histones thereby play a central role in transcription regulation, DNA repair, DNA replication and chromosomal stability. DNA accessibility is regulated via a complex set of post-translational modifications of histones, also called histone code, and nucleosome remodeling. In Talaromyces funiculosus (Fruitlet core rot fungus), this protein is Histone H4.2 (H4.2).